Here is a 103-residue protein sequence, read N- to C-terminus: Large ribosomal subunit protein bL21 (103 aa).

This sequence belongs to the bacterial ribosomal protein bL21 family. Part of the 50S ribosomal subunit. Contacts protein L20.

This protein binds to 23S rRNA in the presence of protein L20. This chain is Large ribosomal subunit protein bL21, found in Polynucleobacter asymbioticus (strain DSM 18221 / CIP 109841 / QLW-P1DMWA-1) (Polynucleobacter necessarius subsp. asymbioticus).